Here is a 428-residue protein sequence, read N- to C-terminus: Immunoglobulin superfamily containing leucine-rich repeat protein (428 aa).

Positions 1 to 18 (MQELHLLWWALLLGLAQA) are cleaved as a signal peptide. The LRRNT domain maps to 19 to 50 (CPEPCDCGEKYGFQIADCAYRDLEAVPPGFPA). Asn-51 carries an N-linked (GlcNAc...) asparagine glycan. LRR repeat units lie at residues 51–72 (NVTALSLSANRLPGLPEGAFRE), 75–96 (LLQSLWLAHNEIRMVAAGALAS), 99–122 (HLKSLDLSHNLISDFAWSDLHNLS), 123–144 (ALQLLKMDSNELTFIPRDAFRS), and 147–168 (ALRSLQLNHNRLHTLAEGTFTP). One can recognise an LRRCT domain in the interval 180 to 231 (NPFDCTCGIVWLKTWALATAVSIPEQDNIACTSPHVLKGTPLSRLPPLPCSA). The Ig-like domain occupies 232 to 343 (PSVQLSYQPS…GSAESSVDVA (112 aa)). The cysteines at positions 257 and 327 are disulfide-linked. N-linked (GlcNAc...) asparagine glycosylation occurs at Asn-309.

It is found in the secreted. The chain is Immunoglobulin superfamily containing leucine-rich repeat protein (ISLR) from Pongo abelii (Sumatran orangutan).